The primary structure comprises 288 residues: CBY1-interacting BAR domain-containing protein 1 (288 aa).

A mitochondrion-targeting transit peptide spans 1–47; that stretch reads MLRRSLENRDAQTRQLQDAVTNVEKHFGELCQIFAAYVRKTARLRDK. A BAR-like region spans residues 10–220; the sequence is DAQTRQLQDA…KIDEEEDLEV (211 aa). A coiled-coil region spans residues 107-176; sequence KMKRDDLKAT…ETIDNFEKQK (70 aa). Residues 266 to 288 are disordered; that stretch reads RKDHQTEDDDEEDEDLDVTEEEN. Residues 271–288 show a composition bias toward acidic residues; that stretch reads TEDDDEEDEDLDVTEEEN.

Belongs to the CIBAR family. As to quaternary structure, homodimer (via BAR-like domain). Heterodimer with FAM92B (via BAR-like domains). Interacts (via BAR-like domain) with CBY1; this interaction is required for targeting FAM92A to centriole and cilium basal body. Interacts (via BAR-like domain) with CBY3; both proteins form a ninefold symmetric structure at the flagellar base; are recruited to the annulus in a mutually dependent manner and regulate annulus positionning.

It is found in the cytoplasm. Its subcellular location is the cytoskeleton. It localises to the microtubule organizing center. The protein resides in the centrosome. The protein localises to the centriole. It is found in the cilium basal body. Its subcellular location is the cell projection. It localises to the cilium. The protein resides in the nucleus. The protein localises to the mitochondrion inner membrane. It is found in the flagellum. In terms of biological role, plays a critical role in regulating mitochondrial ultrastructure and function by maintaining the integrity of mitochondrial morphology, particularly the organization of cristae. Preferentially binds to negatively charged phospholipids like cardiolipin and phosphatidylinositol 4,5-bisphosphate enhancing its interaction with mitochondrial membranes. Induces membrane curvature and tubulation, which are critical for maintaining mitochondrial ultrastructure and the organization of cristae. Plays a crucial role in ciliogenesis. May play a role in limb development through its role in ciliogenesis. Plays a key role in the correct positioning of the annulus, a septin-based ring structure in the sperm flagellum, serving both as a physical barrier and a membrane diffusion barrier that separates the midpiece (MP) from the principal piece (PP). This positioning is essential for proper sperm motility and function. Interacts with CBY3 to form a complex which localizes to the curved membrane region of the flagellar pocket. By doing so, may provide stability and rigidity to the periannular membrane to prevent membrane deformation. This function is crucial for halting annulus migration at the proximal end of the fibrous sheath-containing PP. The sequence is that of CBY1-interacting BAR domain-containing protein 1 from Bos taurus (Bovine).